The primary structure comprises 172 residues: NADH-ubiquinone oxidoreductase chain 6 (172 aa).

The next 5 helical transmembrane spans lie at 1–21 (MTNY…GLAL), 26–48 (IYGG…GFGG), 52–74 (GLMV…TAMA), 86–106 (WFIF…FYLF), and 147–167 (CATW…FIII).

Belongs to the complex I subunit 6 family. As to quaternary structure, core subunit of respiratory chain NADH dehydrogenase (Complex I) which is composed of 45 different subunits.

It localises to the mitochondrion inner membrane. It catalyses the reaction a ubiquinone + NADH + 5 H(+)(in) = a ubiquinol + NAD(+) + 4 H(+)(out). Functionally, core subunit of the mitochondrial membrane respiratory chain NADH dehydrogenase (Complex I) which catalyzes electron transfer from NADH through the respiratory chain, using ubiquinone as an electron acceptor. Essential for the catalytic activity and assembly of complex I. This Rattus norvegicus (Rat) protein is NADH-ubiquinone oxidoreductase chain 6.